The primary structure comprises 137 residues: uncharacterized protein (137 aa).

This is an uncharacterized protein from Schizosaccharomyces pombe (strain 972 / ATCC 24843) (Fission yeast).